An 804-amino-acid chain; its full sequence is Leucine--tRNA ligase (804 aa).

The 'HIGH' region signature appears at 39–50 (PFPSGKGLHVGH). The 'KMSKS' region motif lies at 573–577 (KMSKS). Lys-576 is a binding site for ATP.

The protein belongs to the class-I aminoacyl-tRNA synthetase family.

It localises to the cytoplasm. The enzyme catalyses tRNA(Leu) + L-leucine + ATP = L-leucyl-tRNA(Leu) + AMP + diphosphate. The polypeptide is Leucine--tRNA ligase (Lactobacillus helveticus (strain DPC 4571)).